A 591-amino-acid polypeptide reads, in one-letter code: ADP-ribosylating toxin CARDS (591 aa).

Residues 1-205 (MPNPVRFVYR…LPTPGIATPV (205 aa)) form a mono-ADP ribosyltransferase (mART) domain region. Residues 206–256 (HLSIPQAASVADVSEGTSASLSFACPDWSPPSSNGENPLDKCIAEKIDNYN) form an NAD(+)-binding pocket region. The cysteines at positions 230 and 247 are disulfide-linked. A KELED motif, involved in host ER trafficking, solvent exposed in the crystal structure motif is present at residues 268 to 272 (KELED). Residues 273–439 (TPVYLRGIKT…QFVTMRAAST (167 aa)) are D2 domain. Residues 440–591 (FFVDVQLGWY…ILVKDGFDRF (152 aa)) are D3 domain.

The protein belongs to the bacterial exotoxin subunit A family. As to quaternary structure, monomer. Binds to host (human) pulmonary surfactant-associated protein A1 (SFTPA1), the major mammalian protein component of pulmonary surfactant. Binds to host (human) surface annexin A2 (ANXA2) on the cell surface; anti-ANXA2 antibodies decrease binding to cells. Interacts with cytosolic host (human) NLRP3, which it ADP-ribosylates in vitro. Post-translationally, 8 hours after treatment of HeLa cells with purified protein, a substantial amount is processed to 2 nearly equal-sized fragments. The disulfide bond between Cys-230 and Cys-247 is required to for the toxin to exert its mART and vacuolating activities within target cells, and for protein processing. Acidic pH in the endosome and retrograde transport are required for toxin cleavage, which is required for both toxin activities. Trypsin treatment under mild conditions leads to cleavage at Lys-305 and Lys-307; the 2 proteins fragments remain associated and can be internalized and vacuolate HeLa cells.

Its subcellular location is the cell membrane. The protein localises to the cytoplasm. It is found in the cell surface. The protein resides in the cell projection. It localises to the attachment organelle. Its subcellular location is the host cytoplasm. The protein localises to the host cytosol. It is found in the host endoplasmic reticulum. Its activity is regulated as follows. In vitro ADP-ribosylation is enhanced by dithiotheritol. In terms of biological role, the main virulence factor for this bacteria, a mono-ADP-ribosylating toxin (mART), that transfers the ADP-ribosyl group from NAD(+) to multiple target proteins in vitro. Also elicits cytopathic effects in mammalian cells, such as disorganization and disruption of respiratory epithelial integrity in tracheal epithelium and vacuolization in the cytoplasm of CHO and HeLa cells as well as in mice and baboons. Treatment of mice or baboons with CARDS elicits a response that is consistent with human M.pneumoniae infections and mouse models of both infection and intoxication, suggesting that CARDS toxin is sufficient to cause prolonged inflammatory responses and airway dysfunction. Treatment of baboons with CARDS induces a number of cytokines; G-CSF (40 fold), IL-1Ra (10 fold), IL-6 and IL-8 (333 and 100 fold, respectively), MIP-1a (5 fold), and RANTES (9 fold). Treatment of mice gives a similar response. Binds phosphatidyl choline, dipalmitoylphosphatidylcholine (DPPC) and sphingomyelin via domains D2 plus D3. Functionally, has at least 2 host receptors SFTPA1 and ANXA2. Internalized by a clathrin-mediated process; protein is rapidly taken up at 37 degrees Celsius. Clathrin-independent or caveolin-dependent endocytosis were not detected. In HeLa cells internalized CARDS trafficks toward the nucleus by retrograde transport from early to late endosomes, then the Golgi apparatus; at 16 hours most toxin is concentrated in the perinuclear region in the host endoplasmic reticulum (ER). Failure to localize to the host ER prevents ADP-ribosylation and vacuolization. An acidic compartment is required to mediate retrotransport and processing of toxin into an N-terminal fragment with mART activity and a C-terminal fragment that is able to induce vacuolization. Induces the host NLRP3 inflammasome to release interleukin-1 beta (IL-1 beta); IL-1 beta release requires ADP-ribosylation activity and uptake by host macrophages. In the host colocalizes with the NLRP3 inflammasome; ADP-ribosylates NLRP3 in vitro. ADP-ribosylation of NLRP3 may lead to hyperinflammation. This chain is ADP-ribosylating toxin CARDS, found in Mycoplasma pneumoniae (strain ATCC 29342 / M129 / Subtype 1) (Mycoplasmoides pneumoniae).